Reading from the N-terminus, the 286-residue chain is Polyamine aminopropyltransferase (286 aa).

The region spanning 5–238 is the PABS domain; the sequence is TMWHETLHDQ…GIMTFAWATN (234 aa). Gln-33 serves as a coordination point for S-methyl-5'-thioadenosine. Positions 64 and 88 each coordinate spermidine. S-methyl-5'-thioadenosine is bound by residues Glu-108 and 140-141; that span reads DG. Catalysis depends on Asp-158, which acts as the Proton acceptor. 158 to 161 is a binding site for spermidine; it reads DCTD. Residue Pro-165 coordinates S-methyl-5'-thioadenosine.

It belongs to the spermidine/spermine synthase family. In terms of assembly, homodimer or homotetramer.

It is found in the cytoplasm. The catalysed reaction is S-adenosyl 3-(methylsulfanyl)propylamine + putrescine = S-methyl-5'-thioadenosine + spermidine + H(+). Its pathway is amine and polyamine biosynthesis; spermidine biosynthesis; spermidine from putrescine: step 1/1. Functionally, catalyzes the irreversible transfer of a propylamine group from the amino donor S-adenosylmethioninamine (decarboxy-AdoMet) to putrescine (1,4-diaminobutane) to yield spermidine. The sequence is that of Polyamine aminopropyltransferase from Salmonella paratyphi B (strain ATCC BAA-1250 / SPB7).